Consider the following 127-residue polypeptide: Mu-like prophage FluMu protein gp41 (127 aa).

The interval 107 to 127 is disordered; the sequence is VSRGRLDTADQETGKDLSAVS. Positions 110 to 121 are enriched in basic and acidic residues; it reads GRLDTADQETGK.

To phage Mu protein gp41.

The protein is Mu-like prophage FluMu protein gp41 of Haemophilus influenzae (strain ATCC 51907 / DSM 11121 / KW20 / Rd).